Here is a 313-residue protein sequence, read N- to C-terminus: Foldase protein PrsA (313 aa).

An N-terminal signal peptide occupies residues M1–A20. The N-palmitoyl cysteine moiety is linked to residue C21. The S-diacylglycerol cysteine moiety is linked to residue C21. A PpiC domain is found at T143–K241.

This sequence belongs to the PrsA family.

It localises to the cell membrane. It catalyses the reaction [protein]-peptidylproline (omega=180) = [protein]-peptidylproline (omega=0). In terms of biological role, plays a major role in protein secretion by helping the post-translocational extracellular folding of several secreted proteins. This Streptococcus pneumoniae serotype 4 (strain ATCC BAA-334 / TIGR4) protein is Foldase protein PrsA.